The sequence spans 624 residues: MDSNFKWLLFAILISLTFSGFVLHHGVLAESVKPDEAKQLRDEVRGMFYHAFDGYMNNAFPLDELRPLSCQGEDTLGGYALTLIDSLDTLALLGDRERFTSSVEWIGKNLQFNINKTVSVFETTIRVLGGLLSAHLIASDYATGMRIPSYNNELLVLAENLARRMLPAFDTPTGIPFGSVNLMYGVDKHESKITSTAGGGTLSLEFGVLSRLTNDPVFEQVAKNAVRGLWARRSNLDLVGAHINVFTGEWTQKDAGIGTSIDSFYEYLLKAYILFGDEEYLYIFQEAYRSAMQYLHKDPWYVEVNMDSAAIVWPVFNSLQAFWPGLQVLAGDVDPAIRTHTAFFSVWKRYGFTPEGFNLATLSVQYGQKSYPLRPELIESTYWLYKATRDPRYLDAGRDFVASLQYGAKCPCGYCHITDVELHKQEDHMESFFLAETVKYLWLLFDLAVDSDNLVDNGPYKYIFSTEGHLLPITPQISLAREHCSYFGGYCPSNSTKLEQEVLGEDSSNDDHSNDYPYHESFPVTGLIKGLCPGLTHAQKYGFSYVLPEKTDREDVNQPKPVVTSSSIVLISDQTVEKRPQEEEGFTSQSEPIMTISGGSSNDQTGQELTLLESETDDQRSYSS.

The Cytoplasmic portion of the chain corresponds to M1–W7. A helical; Signal-anchor for type II membrane protein transmembrane segment spans residues L8–L28. The Lumenal portion of the chain corresponds to A29–S624. N115 carries an N-linked (GlcNAc...) asparagine glycan. E122 acts as the Proton donor in catalysis. D262 is an active-site residue. E355 (proton donor) is an active-site residue. The active site involves E376. T466 is a Ca(2+) binding site. N-linked (GlcNAc...) asparagine glycosylation occurs at N494. Residues Q574 to S624 are disordered. The segment covering F586 to E608 has biased composition (polar residues).

Belongs to the glycosyl hydrolase 47 family. It depends on Ca(2+) as a cofactor.

Its subcellular location is the endoplasmic reticulum membrane. It functions in the pathway protein modification; protein glycosylation. In terms of biological role, can convert Man(9)GlcNAc(2) and Man(8)GlcNAc(2) into N-glycans with a terminal alpha-1,6-linked Man residue in the C-branch. Functions in the formation of unique N-glycan structures that are specifically recognized by components of the endoplasmic reticulum-associated degradation (ERAD) machinery, which leads to the degradation of misfolded glycoproteins. Most likely generates N-glycan signal on misfolded glycoproteins that is subsequently recognized by OS9. Required for ERAD of the heavily glycosylated and misfolded BRI1 variants BRI1-5 and BRI1-9. Does not seem to play role in N-glycan processing of correctly folded proteins destined for secretion. The protein is Alpha-mannosidase I MNS4 (MNS4) of Arabidopsis thaliana (Mouse-ear cress).